Consider the following 96-residue polypeptide: UPF0235 protein Ent638_3359 (96 aa).

This sequence belongs to the UPF0235 family.

This is UPF0235 protein Ent638_3359 from Enterobacter sp. (strain 638).